We begin with the raw amino-acid sequence, 341 residues long: MDHAGDAMRTDLMTITRYVLNEQSKRPESRGDFTILLSHIVLGCKFVCSAVNKAGLAKLIGLAGETNIQGEEQKKLDVLSNEVFVKALTSSGRTCILVSEEDEEATFIEPSLRGKYCVVFDPLDGSFNIDCGVSIGTIFGIYMVKDFETATLEDVLQPGKNMVAAGYCMYGSSCTLVLSTGSGVNGFTLDPSLGEYILTHPDIKIPNKGKIYSVNEGNAKNWDGPTTKYVEKCKFPTDGSSPKSLRYIESMVANVHRTLLYGGIFLYPGDKKSPNGKLRVLYEVFPMSFLMEQAGGQAFTGKQRALDLIPTKIHERSPVFLGSYDDVEDIKALYAAQEKTA.

Mg(2+) is bound by residues glutamate 71, glutamate 100, aspartate 121, leucine 123, and aspartate 124. Substrate contacts are provided by residues 124 to 127, asparagine 215, tyrosine 247, tyrosine 267, and lysine 277; that span reads DGSF. Glutamate 283 provides a ligand contact to Mg(2+).

It belongs to the FBPase class 1 family. Mg(2+) is required as a cofactor.

It is found in the cytoplasm. The catalysed reaction is beta-D-fructose 1,6-bisphosphate + H2O = beta-D-fructose 6-phosphate + phosphate. In Pisum sativum (Garden pea), this protein is Fructose-1,6-bisphosphatase, cytosolic.